Reading from the N-terminus, the 305-residue chain is Putative lipid kinase USA300HOU_0749 (305 aa).

The DAGKc domain maps to 3 to 139 (NKYTHGVLFY…YDVIKINNQY (137 aa)). ATP contacts are provided by residues Ser44, 74–80 (GDGTVNE), and Thr101. Residues Ser220, Asp223, and Glu225 each contribute to the Mg(2+) site. The active-site Proton acceptor is Glu281.

The protein belongs to the diacylglycerol/lipid kinase family. Mg(2+) is required as a cofactor.

May catalyze the ATP-dependent phosphorylation of lipids other than diacylglycerol (DAG). The protein is Putative lipid kinase USA300HOU_0749 of Staphylococcus aureus (strain USA300 / TCH1516).